The chain runs to 1031 residues: Beta-galactosidase (1031 aa).

Substrate contacts are provided by asparagine 100 and aspartate 198. Na(+) is bound at residue aspartate 198. Mg(2+) contacts are provided by glutamate 412, histidine 414, and glutamate 457. Residues glutamate 457 and 533-536 (EYAH) contribute to the substrate site. Glutamate 457 serves as the catalytic Proton donor. Glutamate 533 functions as the Nucleophile in the catalytic mechanism. Mg(2+) is bound at residue asparagine 593. Residues phenylalanine 597 and asparagine 600 each contribute to the Na(+) site. Substrate is bound by residues asparagine 600 and tryptophan 1005.

The protein belongs to the glycosyl hydrolase 2 family. In terms of assembly, homotetramer. It depends on Mg(2+) as a cofactor. Na(+) serves as cofactor.

The enzyme catalyses Hydrolysis of terminal non-reducing beta-D-galactose residues in beta-D-galactosides.. In Vibrio vulnificus (strain YJ016), this protein is Beta-galactosidase.